Reading from the N-terminus, the 590-residue chain is Regulatory solute carrier protein family 1 member 1 (590 aa).

4 disordered regions span residues 1–116 (MSSS…TQGL), 144–234 (EEGW…PDSE), 277–331 (SPSS…AEES), and 359–466 (EEVT…SHRT). Positions 16–35 (SSGQSPEAGNPTSLARSVSA) are enriched in polar residues. Over residues 78-91 (SPCAAAAAPSSAMP) the composition is skewed to low complexity. Positions 150 to 161 (ENQNPSQVNDLQ) are enriched in polar residues. Composition is skewed to basic and acidic residues over residues 162-179 (QHQE…RDAP) and 188-203 (PGER…REAT). Positions 313 to 331 (SSSSVCGSSQPPAESAEES) are enriched in low complexity. Residues 362 to 376 (TCQSEGTAWGQTRVN) show a composition bias toward polar residues. Basic and acidic residues-rich tracts occupy residues 380–395 (RWTE…DRPQ) and 404–420 (VKTE…RIED). The segment covering 451-465 (SVTVTSAETSNQSHR) has biased composition (polar residues). The UBA domain occupies 544 to 584 (GFPAADIDRILRAGFTLQEALGALHRVGGNADLALLVLLAK).

As to quaternary structure, interacts with YRDC. In terms of tissue distribution, highly expressed in renal outer medulla, renal inner medulla, duodenum, ileum and jejunum. Moderately expressed in renal outer cortex, renal papilla, brain and liver.

Its subcellular location is the cell membrane. The protein resides in the nucleus. It localises to the golgi apparatus. It is found in the trans-Golgi network. Its function is as follows. Mediates transcriptional and post-transcriptional regulation of SLC5A1. Inhibits a dynamin and PKC-dependent exocytotic pathway of SLC5A1. Also involved in transcriptional regulation of SLC22A2. Exhibits glucose-dependent, short-term inhibition of SLC5A1 and SLC22A2 by inhibiting the release of vesicles from the trans-Golgi network. The chain is Regulatory solute carrier protein family 1 member 1 (RSC1A1) from Oryctolagus cuniculus (Rabbit).